We begin with the raw amino-acid sequence, 248 residues long: Protein UL24 homolog (248 aa).

Residues 194-248 (DRPRPTAQGHRPRTHVGPKPSQLTARVPRSARAGRAGGRKGQVGAVGQVCPGAQK) form a disordered region. The segment covering 218–227 (ARVPRSARAG) has biased composition (low complexity).

This sequence belongs to the herpesviridae UL24 family.

The protein resides in the virion. Its subcellular location is the host cytoplasm. It localises to the host nucleus. The protein localises to the host nucleolus. It is found in the host Golgi apparatus. Functionally, may participate in nuclear egress of viral particles. Plays a role in the dispersal of several host nucleolar proteins including NCL/nucleolin and NPM1. Since deletion of host NCL/nucleolin negatively impact on nuclear egress, UL24 supposedly acts on this process through its effect on host nucleoli. The polypeptide is Protein UL24 homolog (Homo sapiens (Human)).